A 184-amino-acid polypeptide reads, in one-letter code: Tyrosine-protein kinase receptor Tie-1 (184 aa).

In terms of domain architecture, Protein kinase spans 1-164; that stretch reads QLLQFAADVA…RMQEARKAYV (164 aa). Residue Asp25 is the Proton acceptor of the active site. Tyr53 is modified (phosphotyrosine; by autocatalysis).

The protein belongs to the protein kinase superfamily. Tyr protein kinase family. Tie subfamily. As to quaternary structure, interacts with svep1. As to expression, expressed in most populations of endothelial cells in 24 hours embryos, including the endocardium.

The protein resides in the cell membrane. The catalysed reaction is L-tyrosyl-[protein] + ATP = O-phospho-L-tyrosyl-[protein] + ADP + H(+). In terms of biological role, transmembrane tyrosine-protein kinase. Required for the formation of facial lymphatic structures and brain lymphatic endothelial cells. Also required for embryonic ventral and dorsal migration of parachordal lymphoblasts along the arterial intersegmental vessel. Plays a role in the embryonic formation of the dorsal longitudinal anastomotic vessel. In Danio rerio (Zebrafish), this protein is Tyrosine-protein kinase receptor Tie-1 (tie1).